Here is a 485-residue protein sequence, read N- to C-terminus: Glutamyl-tRNA(Gln) amidotransferase subunit A (485 aa).

Residues K78 and S153 each act as charge relay system in the active site. The Acyl-ester intermediate role is filled by S177.

This sequence belongs to the amidase family. GatA subfamily. In terms of assembly, heterotrimer of A, B and C subunits.

It carries out the reaction L-glutamyl-tRNA(Gln) + L-glutamine + ATP + H2O = L-glutaminyl-tRNA(Gln) + L-glutamate + ADP + phosphate + H(+). Its function is as follows. Allows the formation of correctly charged Gln-tRNA(Gln) through the transamidation of misacylated Glu-tRNA(Gln) in organisms which lack glutaminyl-tRNA synthetase. The reaction takes place in the presence of glutamine and ATP through an activated gamma-phospho-Glu-tRNA(Gln). In Bacillus cereus (strain AH820), this protein is Glutamyl-tRNA(Gln) amidotransferase subunit A.